A 681-amino-acid polypeptide reads, in one-letter code: Proton channel OTOP3 (681 aa).

Basic and acidic residues predominate over residues 1 to 25 (MLSKEEPACRQFHSREKTWGNEHNG). The segment at 1 to 26 (MLSKEEPACRQFHSREKTWGNEHNGK) is disordered. Residues 1 to 112 (MLSKEEPACR…LHQRAKKTGR (112 aa)) lie on the Cytoplasmic side of the membrane. Residues 113–133 (LFSGLFGLNLMFLGGTVVSSV) form a helical membrane-spanning segment. Over 134–143 (ALSNKAVPER) the chain is Extracellular. Residues 144–166 (DSQSFLCILMLLSSVWALYHLLF) traverse the membrane as a helical segment. The Cytoplasmic segment spans residues 167 to 182 (IRNQNGAVHHDHHAGA). Residues 183 to 204 (MWLKASLAIFGVCSIILSIFEI) form a helical membrane-spanning segment. Over 205–216 (GHALLLQNCEIL) the chain is Extracellular. Residues 217–240 (MDIVFFSIEIVFVSVQTVLLWVSC) form a helical membrane-spanning segment. The Cytoplasmic portion of the chain corresponds to 241–248 (KDCVQMHH). Residues 249-271 (SVTRYGIMLTLATDILLWLTAVI) form a helical membrane-spanning segment. Over 272 to 317 (DDSLEQDLEILQSNSTQDESNEMAQCQCPTDSMCWGLKQGYVTMFP) the chain is Extracellular. A helical membrane pass occupies residues 318–334 (FNIEYSLICATLLFIMW). Over 335–358 (KNVGRREKLHSDPPRHTFQLRGII) the chain is Cytoplasmic. The chain crosses the membrane as a helical span at residues 359-378 (YGPLIGGAALLVGISVFVQY). Residues 379–392 (QVEATSGMVSILSY) lie on the Extracellular side of the membrane. Residues 393–415 (HMYYGYKMIILAPMIVCSVAGII) traverse the membrane as a helical segment. Topologically, residues 416-507 (AHSLREKEKK…QGKMKNYTRK (92 aa)) are cytoplasmic. The helical transmembrane segment at 508 to 529 (LDVTLLFVSAVGQLGISYFSII) threads the bilayer. Over 530-540 (ATVVTTPWTML) the chain is Extracellular. The chain crosses the membrane as a helical span at residues 541 to 563 (SALNFSNSLLLILQYLSQTMFII). The Cytoplasmic segment spans residues 564 to 614 (ESMRSIHEEEKEKPGHHEESHRRMSVQEMHKAPPSCLDAGHLGLSRRVVKE). Residues 615-632 (MAMFLMICNIMCWILGAF) traverse the membrane as a helical segment. The Extracellular segment spans residues 633–651 (GAHPLYMNGLERQLYGSGI). Residues 652–674 (WLAILNIGLPLSVFYRMHSVGIL) traverse the membrane as a helical segment. At 675–681 (LEVYLHA) the chain is on the cytoplasmic side.

Belongs to the otopetrin family. As to quaternary structure, homodimer.

Its subcellular location is the cell membrane. The catalysed reaction is H(+)(in) = H(+)(out). Its activity is regulated as follows. pH regulates the proton channel activity from both sides of the plasma membrane. Low pH activates the channel from the extracellular side but inactivates the channel on the intracellular side. Zn(2+) and Ca(2+) can partially block the channel. Functionally, proton-selective channel gated by extracellular protons. The protein is Proton channel OTOP3 (otop3) of Xenopus tropicalis (Western clawed frog).